The primary structure comprises 284 residues: tRNA (guanine-N(7)-)-methyltransferase (284 aa).

S-adenosyl-L-methionine-binding positions include Gly102, 125–126 (EI), 160–161 (NT), and Cys180. The active site involves Asp183. 258 to 260 (TEE) lines the S-adenosyl-L-methionine pocket.

This sequence belongs to the class I-like SAM-binding methyltransferase superfamily. TrmB family. In terms of assembly, forms a complex with TRM82.

The protein resides in the nucleus. The enzyme catalyses guanosine(46) in tRNA + S-adenosyl-L-methionine = N(7)-methylguanosine(46) in tRNA + S-adenosyl-L-homocysteine. It functions in the pathway tRNA modification; N(7)-methylguanine-tRNA biosynthesis. Functionally, catalyzes the formation of N(7)-methylguanine at position 46 (m7G46) in tRNA. This is tRNA (guanine-N(7)-)-methyltransferase from Podospora anserina (strain S / ATCC MYA-4624 / DSM 980 / FGSC 10383) (Pleurage anserina).